The primary structure comprises 1447 residues: Sister chromatid cohesion protein PDS5 homolog B (1447 aa).

The HEAT repeat unit spans residues L383–Y419. K1136 carries the post-translational modification N6-acetyllysine. The segment covering P1137–V1155 has biased composition (polar residues). The disordered stretch occupies residues P1137–R1447. A phosphoserine mark is found at S1140, S1162, S1166, S1176, S1182, and S1191. Residues S1156–P1167 show a composition bias toward low complexity. Positions G1172–N1184 are enriched in basic and acidic residues. A compositionally biased stretch (basic and acidic residues) spans K1196 to P1214. Position 1221 is a phosphoserine (S1221). Positions P1225 to P1243 are enriched in basic and acidic residues. Basic residues predominate over residues G1245–H1254. The a.T hook 1 DNA-binding region spans Q1247–S1259. Phosphoserine occurs at positions 1257 and 1259. A compositionally biased stretch (basic and acidic residues) spans P1265 to L1274. S1283 is subject to Phosphoserine. The a.T hook 2 DNA-binding region spans K1287–G1299. Composition is skewed to basic residues over residues T1309–P1318 and K1341–Q1352. Phosphoserine is present on residues S1357 and S1365. Over residues P1358–Q1371 the composition is skewed to polar residues. Position 1366 is a phosphothreonine (T1366). Phosphoserine is present on S1368. A phosphothreonine mark is found at T1369 and T1380. Positions Q1371 to P1383 form a DNA-binding region, a.T hook 3. Low complexity predominate over residues S1378–K1387. S1382, S1416, and S1419 each carry phosphoserine. Acidic residues predominate over residues T1422–I1432. Basic residues predominate over residues V1437 to R1447.

It belongs to the PDS5 family. In terms of assembly, interacts with the cohesin complex. Interacts with RAD21; the interaction is direct. Interacts with WAPL (via FGF motifs) or CDCA5 (via the FGF motif); the interaction is direct, cohesin-dependent and competitive. As to expression, highly expressed in intact prostate with levels decreasing after castration. Expressed exclusively in prostate cells inhibited from proliferating by long-term androgen exposure.

The protein localises to the nucleus. Functionally, regulator of sister chromatid cohesion in mitosis which may stabilize cohesin complex association with chromatin. May couple sister chromatid cohesion during mitosis to DNA replication. Cohesion ensures that chromosome partitioning is accurate in both meiotic and mitotic cells and plays an important role in DNA repair. Plays a role in androgen-induced proliferative arrest in prostate cells. This chain is Sister chromatid cohesion protein PDS5 homolog B (Pds5b), found in Rattus norvegicus (Rat).